The sequence spans 470 residues: Poly(A) polymerase catalytic subunit (470 aa).

Residues Asp192 and Asp194 contribute to the active site.

This sequence belongs to the poxviridae poly(A) polymerase catalytic subunit family. In terms of assembly, heterodimer of a large (catalytic) subunit and a small (regulatory) subunit.

The enzyme catalyses RNA(n) + ATP = RNA(n)-3'-adenine ribonucleotide + diphosphate. Its function is as follows. Polymerase that creates the 3'-poly(A) tail of mRNA's. This Erythrocebus patas (Red guenon) protein is Poly(A) polymerase catalytic subunit (PAPL).